A 600-amino-acid chain; its full sequence is NADH-quinone oxidoreductase subunit C/D (600 aa).

The NADH dehydrogenase I subunit C stretch occupies residues 1-190 (MVNNMTDLTA…SPFELTKAKQ (190 aa)). The tract at residues 214–600 (DFMFLNLGPN…IDFVMSDVDR (387 aa)) is NADH dehydrogenase I subunit D.

It in the N-terminal section; belongs to the complex I 30 kDa subunit family. This sequence in the C-terminal section; belongs to the complex I 49 kDa subunit family. In terms of assembly, NDH-1 is composed of 13 different subunits. Subunits NuoB, CD, E, F, and G constitute the peripheral sector of the complex.

Its subcellular location is the cell inner membrane. The catalysed reaction is a quinone + NADH + 5 H(+)(in) = a quinol + NAD(+) + 4 H(+)(out). Functionally, NDH-1 shuttles electrons from NADH, via FMN and iron-sulfur (Fe-S) centers, to quinones in the respiratory chain. The immediate electron acceptor for the enzyme in this species is believed to be ubiquinone. Couples the redox reaction to proton translocation (for every two electrons transferred, four hydrogen ions are translocated across the cytoplasmic membrane), and thus conserves the redox energy in a proton gradient. This chain is NADH-quinone oxidoreductase subunit C/D, found in Escherichia coli O157:H7.